The primary structure comprises 475 residues: UDP-glucosyltransferase UGT13248 (475 aa).

Over residues 1–17 (METTVTAVSGTTSSSVG) the composition is skewed to low complexity. Residues 1 to 20 (METTVTAVSGTTSSSVGHGA) form a disordered region. UDP-alpha-D-glucose contacts are provided by residues His38, Ser152, Thr299, Cys352, 369–377 (HCGWNSTLE), and 393–394 (DQ).

The protein belongs to the UDP-glycosyltransferase family.

Its function is as follows. Involved in the detoxification of the Fusarium mycotoxin deoxynivalenol by the transfer of glucose from UDP-D-glucose to the hydroxyl group at C-3, forming deoxynivalenol-3-O-beta-D-glucoside. The sequence is that of UDP-glucosyltransferase UGT13248 from Hordeum vulgare subsp. vulgare (Domesticated barley).